A 159-amino-acid polypeptide reads, in one-letter code: NADH-quinone oxidoreductase subunit B 2 (159 aa).

The [4Fe-4S] cluster site is built by Cys37, Cys38, Cys102, and Cys132.

The protein belongs to the complex I 20 kDa subunit family. In terms of assembly, NDH-1 is composed of 14 different subunits. Subunits NuoB, C, D, E, F, and G constitute the peripheral sector of the complex. It depends on [4Fe-4S] cluster as a cofactor.

The protein resides in the cell inner membrane. It carries out the reaction a quinone + NADH + 5 H(+)(in) = a quinol + NAD(+) + 4 H(+)(out). NDH-1 shuttles electrons from NADH, via FMN and iron-sulfur (Fe-S) centers, to quinones in the respiratory chain. Couples the redox reaction to proton translocation (for every two electrons transferred, four hydrogen ions are translocated across the cytoplasmic membrane), and thus conserves the redox energy in a proton gradient. The sequence is that of NADH-quinone oxidoreductase subunit B 2 from Azoarcus sp. (strain BH72).